Here is a 500-residue protein sequence, read N- to C-terminus: Tyrosine decarboxylase 2 (500 aa).

Repeat copies occupy residues 65 to 122 and 125 to 176. A 2 X approximate tandem repeats region spans residues 65 to 176; the sequence is EDIRQKIVPG…KFLNRFGKRS (112 aa). Serine 89 lines the substrate pocket. Residues alanine 153 and serine 154 each contribute to the pyridoxal 5'-phosphate site. Position 189 (histidine 189) interacts with substrate. Pyridoxal 5'-phosphate contacts are provided by threonine 248 and asparagine 302. At lysine 305 the chain carries N6-(pyridoxal phosphate)lysine.

This sequence belongs to the group II decarboxylase family. Requires pyridoxal 5'-phosphate as cofactor. As to expression, mostly expressed in bulbs, and, to a lower extent, in stems, roots, leaves and flowers.

It carries out the reaction L-tyrosine + H(+) = tyramine + CO2. It participates in alkaloid biosynthesis. Its function is as follows. Catalyzes the decarboxylation of L-tyrosine to tyramine, which is converted to norbelladine, a precursor to all Amaryllidaceae alkaloids such as galanthamine, lycorine and haemanthamine, and including haemanthamine- and crinamine-type alkaloids, promising anticancer agents. The protein is Tyrosine decarboxylase 2 of Narcissus pseudonarcissus (Daffodil).